Consider the following 207-residue polypeptide: MARYIGPKAKLSRREGTDLFLKSARRSLADKCKLDSKPGQHGRTSGARTSDYGTQLREKQKVKRIYGVLERQFRRYFAEADRRKGNTGENLLQLLESRLDNVVYRMGFGSTRAEARQLVSHKSITVNGIVANVPSQQVKAGDVIAIREKAKKQARIIEALSLAEQGGMPSWVAVDAKKFEGTFKQVPERADIGGDINESLIVELYSR.

The tract at residues 31-55 (KCKLDSKPGQHGRTSGARTSDYGTQ) is disordered. Polar residues predominate over residues 42–53 (GRTSGARTSDYG). Residues 97-160 (SRLDNVVYRM…KKQARIIEAL (64 aa)) enclose the S4 RNA-binding domain.

Belongs to the universal ribosomal protein uS4 family. In terms of assembly, part of the 30S ribosomal subunit. Contacts protein S5. The interaction surface between S4 and S5 is involved in control of translational fidelity.

In terms of biological role, one of the primary rRNA binding proteins, it binds directly to 16S rRNA where it nucleates assembly of the body of the 30S subunit. Functionally, with S5 and S12 plays an important role in translational accuracy. The polypeptide is Small ribosomal subunit protein uS4 (Burkholderia multivorans (strain ATCC 17616 / 249)).